Reading from the N-terminus, the 208-residue chain is Small ribosomal subunit protein uS4 (208 aa).

The tract at residues 31–51 is disordered; the sequence is SALDKRAYGPGQHGQRRAKTS. In terms of domain architecture, S4 RNA-binding spans 98-156; it reads RRLDNVVYRMGFATTRSSARQLVTHGHVLVDGKRLDIPSYFVRSGQKIEIKEKTKSNPQ.

This sequence belongs to the universal ribosomal protein uS4 family. As to quaternary structure, part of the 30S ribosomal subunit. Contacts protein S5. The interaction surface between S4 and S5 is involved in control of translational fidelity.

One of the primary rRNA binding proteins, it binds directly to 16S rRNA where it nucleates assembly of the body of the 30S subunit. Its function is as follows. With S5 and S12 plays an important role in translational accuracy. In Helicobacter pylori (strain HPAG1), this protein is Small ribosomal subunit protein uS4.